A 182-amino-acid polypeptide reads, in one-letter code: ATP-dependent protease subunit HslV (182 aa).

Threonine 10 is an active-site residue. Positions 164, 167, and 170 each coordinate Na(+).

Belongs to the peptidase T1B family. HslV subfamily. As to quaternary structure, a double ring-shaped homohexamer of HslV is capped on each side by a ring-shaped HslU homohexamer. The assembly of the HslU/HslV complex is dependent on binding of ATP.

It is found in the cytoplasm. It carries out the reaction ATP-dependent cleavage of peptide bonds with broad specificity.. Allosterically activated by HslU binding. Functionally, protease subunit of a proteasome-like degradation complex believed to be a general protein degrading machinery. This Chelativorans sp. (strain BNC1) protein is ATP-dependent protease subunit HslV.